The sequence spans 56 residues: Secreted virulence factor CLU5a (56 aa).

Positions 1–18 are cleaved as a signal peptide; the sequence is MKVSLTLLATLCASLASA.

This sequence belongs to the MC69 virulence factor family. As to quaternary structure, homodimer; disulfide-linked. Dimerization can possibly extend to multimerisation.

Its subcellular location is the secreted. In terms of biological role, secreted protein required for appressorial penetration of intact host epidermal cells and for pathogenicit, but not for subsequent biotrophic and necrotrophic colonization of leaves. The sequence is that of Secreted virulence factor CLU5a from Colletotrichum graminicola (strain M1.001 / M2 / FGSC 10212) (Maize anthracnose fungus).